We begin with the raw amino-acid sequence, 1777 residues long: FERM and PDZ domain-containing protein 3 (1777 aa).

The region spanning 21-98 (QVTVHRDPIY…FIVLTVLHTH (78 aa)) is the PDZ domain. The FERM domain occupies 147–461 (NVLKVFLENG…GYCRLLLDSR (315 aa)). 7 disordered regions span residues 491-520 (TGGHLGKKESSYVGSVGTSPRKSSRCTPPP), 555-574 (ETRPRTKSDPTSKSSGQGYE), 622-697 (QLGP…GRHL), 832-871 (SLGRPDPNPSLQPIATGQSPGPPGARRKLPQSEGQVQGER), 1014-1216 (SAPE…PFRL), 1309-1346 (RPQATQTPVPSLRGRERDRVLPSQRQPEAGPGVSLSSP), and 1732-1765 (QQQQQQQQQQQQVAAAAGAATEHPPGSPTSATVM). A compositionally biased stretch (polar residues) spans 502-511 (YVGSVGTSPR). Residues 555 to 564 (ETRPRTKSDP) are compositionally biased toward basic and acidic residues. Residues 649-659 (SEEEEEEEDET) are compositionally biased toward acidic residues. Composition is skewed to polar residues over residues 840–850 (PSLQPIATGQS), 1015–1035 (APETSWNSQHQLGAEVSSSPR), 1046–1056 (HLSQQEDSLPV), and 1094–1111 (LQKQGTISSQGEKAQLES). Low complexity predominate over residues 1134 to 1168 (QSPSCQSRSHSPSCQPHGHSPSSQSRGQSPSCQPR). Residues 1172 to 1202 (PLRSQAASRQVSTMPSRKLETTLNGAHSTSE) show a composition bias toward polar residues. The segment covering 1732 to 1751 (QQQQQQQQQQQQVAAAAGAA) has biased composition (low complexity).

This is FERM and PDZ domain-containing protein 3 from Homo sapiens (Human).